The chain runs to 121 residues: Piercer of microtubule wall 2 protein (121 aa).

The span at 1 to 10 (MTDRNRDKKS) shows a compositional bias: basic and acidic residues. A disordered region spans residues 1–29 (MTDRNRDKKSTSPSNSDTEMKSEQLPPCV).

Belongs to the PIERCE2 family. As to quaternary structure, microtubule inner protein component of sperm flagellar doublet microtubules. Interacts with CFAP53, ODAD1 and ODAD3; the interactions link the outer dynein arms docking complex (ODA-DC) to the internal microtubule inner proteins (MIP) in cilium axoneme. In terms of tissue distribution, expressed in airway epithelial cells.

It is found in the cytoplasm. Its subcellular location is the cytoskeleton. It localises to the cilium axoneme. The protein localises to the flagellum axoneme. Microtubule inner protein involved in the attachment of outer dynein arms (ODAs) to dynein-decorated doublet microtubules (DMTs) in cilia axoneme, which is required for motile cilia beating. This Homo sapiens (Human) protein is Piercer of microtubule wall 2 protein.